A 407-amino-acid chain; its full sequence is Phosphopentomutase (407 aa).

The Mn(2+) site is built by Asp10, Asp306, His311, Asp347, His348, and His359.

This sequence belongs to the phosphopentomutase family. Requires Mn(2+) as cofactor.

It is found in the cytoplasm. It catalyses the reaction 2-deoxy-alpha-D-ribose 1-phosphate = 2-deoxy-D-ribose 5-phosphate. The enzyme catalyses alpha-D-ribose 1-phosphate = D-ribose 5-phosphate. The protein operates within carbohydrate degradation; 2-deoxy-D-ribose 1-phosphate degradation; D-glyceraldehyde 3-phosphate and acetaldehyde from 2-deoxy-alpha-D-ribose 1-phosphate: step 1/2. Its function is as follows. Isomerase that catalyzes the conversion of deoxy-ribose 1-phosphate (dRib-1-P) and ribose 1-phosphate (Rib-1-P) to deoxy-ribose 5-phosphate (dRib-5-P) and ribose 5-phosphate (Rib-5-P), respectively. In Erwinia tasmaniensis (strain DSM 17950 / CFBP 7177 / CIP 109463 / NCPPB 4357 / Et1/99), this protein is Phosphopentomutase.